We begin with the raw amino-acid sequence, 559 residues long: 2,3-bisphosphoglycerate-independent phosphoglycerate mutase (559 aa).

Mn(2+) is bound by residues aspartate 28 and serine 81. The active-site Phosphoserine intermediate is serine 81. Substrate contacts are provided by residues histidine 140, 170–171 (RD), arginine 206, arginine 213, 286–289 (RADR), and lysine 361. Aspartate 430, histidine 434, aspartate 471, histidine 472, and histidine 501 together coordinate Mn(2+).

The protein belongs to the BPG-independent phosphoglycerate mutase family. As to quaternary structure, monomer. It depends on Mn(2+) as a cofactor. In terms of tissue distribution, found ubiquitously in germinating seed.

The protein localises to the cytoplasm. It catalyses the reaction (2R)-2-phosphoglycerate = (2R)-3-phosphoglycerate. It participates in carbohydrate degradation; glycolysis; pyruvate from D-glyceraldehyde 3-phosphate: step 3/5. In terms of biological role, catalyzes the interconversion of 2-phosphoglycerate and 3-phosphoglycerate. The polypeptide is 2,3-bisphosphoglycerate-independent phosphoglycerate mutase (Nicotiana tabacum (Common tobacco)).